The following is a 208-amino-acid chain: FMN-dependent NADH:quinone oxidoreductase (208 aa).

FMN contacts are provided by residues serine 10, 16–18, and 96–99; these read SRS and MYNF.

This sequence belongs to the azoreductase type 1 family. As to quaternary structure, homodimer. The cofactor is FMN.

It catalyses the reaction 2 a quinone + NADH + H(+) = 2 a 1,4-benzosemiquinone + NAD(+). The catalysed reaction is N,N-dimethyl-1,4-phenylenediamine + anthranilate + 2 NAD(+) = 2-(4-dimethylaminophenyl)diazenylbenzoate + 2 NADH + 2 H(+). Quinone reductase that provides resistance to thiol-specific stress caused by electrophilic quinones. Functionally, also exhibits azoreductase activity. Catalyzes the reductive cleavage of the azo bond in aromatic azo compounds to the corresponding amines. This Xanthobacter autotrophicus (strain ATCC BAA-1158 / Py2) protein is FMN-dependent NADH:quinone oxidoreductase.